Here is an 897-residue protein sequence, read N- to C-terminus: Interleukin enhancer-binding factor 3 (897 aa).

Residues 5–378 (RIFVNDDRHV…PMKRPMEEDG (374 aa)) form the DZF domain. Residues 52–85 (QEKGNSELSEAENMDTPPDDESKEGAGEQKAEHM) form a disordered region. The span at 60–73 (SEAENMDTPPDDES) shows a compositional bias: acidic residues. Phosphothreonine is present on Thr-67. Residues 74–85 (KEGAGEQKAEHM) are compositionally biased toward basic and acidic residues. N6-acetyllysine is present on Lys-100. Thr-188 is modified (phosphothreonine; by PKR). Ser-190 carries the post-translational modification Phosphoserine. Residue Lys-297 forms a Glycyl lysine isopeptide (Lys-Gly) (interchain with G-Cter in ubiquitin) linkage. Residue Thr-315 is modified to Phosphothreonine; by PKR. A Glycyl lysine isopeptide (Lys-Gly) (interchain with G-Cter in SUMO1) cross-link involves residue Lys-348. Positions 363–401 (TTYAITPMKRPMEEDGEEKSPSKKKKKIQKKEEKAEPPQ) are disordered. The short motif at 371–389 (KRPMEEDGEEKSPSKKKKK) is the Bipartite nuclear localization signal element. The span at 372–383 (RPMEEDGEEKSP) shows a compositional bias: basic and acidic residues. Residues Ser-382 and Ser-384 each carry the phosphoserine modification. Residue Lys-396 forms a Glycyl lysine isopeptide (Lys-Gly) (interchain with G-Cter in SUMO2) linkage. Positions 398-467 (EPPQAMNALM…AVKVLQDMGL (70 aa)) constitute a DRBM 1 domain. An N6-acetyllysine modification is found at Lys-460. 3 disordered regions span residues 466-524 (GLPT…LTKH), 624-662 (GMGGPMHNEAPPPPNIRGRGRGGNIRGRGRGRGFGGTNH), and 720-897 (GDSY…YQYR). The segment covering 472 to 481 (EGRDSSKGED) has biased composition (basic and acidic residues). Residues Ser-476, Ser-477, Ser-482, and Ser-486 each carry the phosphoserine modification. Lys-489 participates in a covalent cross-link: Glycyl lysine isopeptide (Lys-Gly) (interchain with G-Cter in SUMO2). Over residues 499 to 508 (VEAVSNPSSV) the composition is skewed to low complexity. Residues 524–590 (HGKNPVMELN…ALAALEKLFP (67 aa)) form the DRBM 2 domain. Residues 609–897 (RGGPKFAAKP…TEHSMNYQYR (289 aa)) form an interaction with PRMT1 region. A compositionally biased stretch (gly residues) spans 644 to 662 (RGGNIRGRGRGRGFGGTNH). Composition is skewed to low complexity over residues 745–769 (SYSSGYQSHQGQQQPYNQSQYSSYG), 783–794 (GSYSSYSNSYNS), and 802–812 (DYSYDSKFNYS). 4 positions are modified to phosphoserine: Ser-794, Ser-812, Ser-814, and Ser-818. Gly residues predominate over residues 813–822 (GSGGRSGGNS). The segment covering 823-833 (YGSSGSSYNTG) has biased composition (low complexity). Positions 834–844 (SHGGYGAGSGG) are enriched in gly residues. The span at 845–885 (SSSYQGKQGGYSSQSNYSSPGSSQSYSGPASSYQSSQGGYS) shows a compositional bias: low complexity.

As to quaternary structure, identified in a IGF2BP1-dependent mRNP granule complex containing untranslated mRNAs. Interacts with FUS and SMN. Interacts (via C-terminus) with PRMT1. Forms a complex with ILF2. Can also bind to PRKDC/XRCC7: this may stabilize the interaction of PRKDC/XRCC7 and the heterodimeric complex of XRCC6/KU70 and XRCC5/KU80. Forms a heteromeric complex with ZNF346 and ILF3. Found in a nuclear export complex with XPO5, ILF3, Ran and double-stranded RNA or double-stranded minihelix VA1 RNA. Found in a nuclear export complex with XPO5, RAN, ILF3, ZNF346 and double-stranded RNA. Interacts with XPO5 and ZNF346. Forms a complex with ILF2, YLPM1, KHDRBS1, RBMX, NCOA5 and PPP1CA. Interacts with AGO1 and AGO2. Interacts with DHX36; this interaction occurs in a RNA-dependent manner. Interacts with ELAVL1; this interaction occurs in a RNA-dependent manner. Interacts with HAVCR2; this interaction promotes ILF3 ubiquitination and subsequent degradation. Post-translationally, phosphorylated at Thr-188 and Thr-315 by PKR in response to RNA viruses. This phosphorylation results in the dissociation of ILF2 from the ILF2-ILF3 complex resulting in a cytoplasmic sequestration of ILF3 where it can bind to viral RNAs and impede viral replication. In terms of processing, methylated by protein arginine N-methyltransferase 1.

The protein localises to the nucleus. The protein resides in the nucleolus. Its subcellular location is the cytoplasm. RNA-binding protein that plays an essential role in the biogenesis of circular RNAs (circRNAs) which are produced by back-splicing circularization of pre-mRNAs. Within the nucleus, promotes circRNAs processing by stabilizing the regulatory elements residing in the flanking introns of the circularized exons. Plays thereby a role in the back-splicing of a subset of circRNAs. As a consequence, participates in a wide range of transcriptional and post-transcriptional processes. Binds to poly-U elements and AU-rich elements (AREs) in the 3'-UTR of target mRNAs. Upon viral infection, ILF3 accumulates in the cytoplasm and participates in the innate antiviral response. Mechanistically, ILF3 becomes phosphorylated and activated by the double-stranded RNA-activated protein kinase/PKR which releases ILF3 from cellular mature circRNAs. In turn, unbound ILF3 molecules are able to interact with and thus inhibit viral mRNAs. This Rattus norvegicus (Rat) protein is Interleukin enhancer-binding factor 3 (Ilf3).